Here is a 559-residue protein sequence, read N- to C-terminus: MSPTILSFSGVTVPAMPSSGSLSGNTYLRLIDTQCSTMRELKQIHASLIKTGLISDTVTASRVLAFCCASPSDMNYAYLVFTRINHKNPFVWNTIIRGFSRSSFPEMAISIFIDMLCSSPSVKPQRLTYPSVFKAYGRLGQARDGRQLHGMVIKEGLEDDSFIRNTMLHMYVTCGCLIEAWRIFLGMIGFDVVAWNSMIMGFAKCGLIDQAQNLFDEMPQRNGVSWNSMISGFVRNGRFKDALDMFREMQEKDVKPDGFTMVSLLNACAYLGASEQGRWIHEYIVRNRFELNSIVVTALIDMYCKCGCIEEGLNVFECAPKKQLSCWNSMILGLANNGFEERAMDLFSELERSGLEPDSVSFIGVLTACAHSGEVHRADEFFRLMKEKYMIEPSIKHYTLMVNVLGGAGLLEEAEALIKNMPVEEDTVIWSSLLSACRKIGNVEMAKRAAKCLKKLDPDETCGYVLLSNAYASYGLFEEAVEQRLLMKERQMEKEVGCSSIEVDFEVHEFISCGGTHPKSAEIYSLLDILNWDVSTIKSGFAELFDATTRIGFTYLAEK.

A chloroplast-targeting transit peptide spans 1–14; the sequence is MSPTILSFSGVTVP. PPR repeat units lie at residues 88–122, 125–159, 160–190, 191–221, 222–256, 257–291, 292–322, 323–357, 358–388, and 394–424; these read NPFVWNTIIRGFSRSSFPEMAISIFIDMLCSSPSV, QRLTYPSVFKAYGRLGQARDGRQLHGMVIKEGLED, DSFIRNTMLHMYVTCGCLIEAWRIFLGMIGF, DVVAWNSMIMGFAKCGLIDQAQNLFDEMPQR, NGVSWNSMISGFVRNGRFKDALDMFREMQEKDVKP, DGFTMVSLLNACAYLGASEQGRWIHEYIVRNRFEL, NSIVVTALIDMYCKCGCIEEGLNVFECAPKK, QLSCWNSMILGLANNGFEERAMDLFSELERSGLEP, DSVSFIGVLTACAHSGEVHRADEFFRLMKEK, and SIKHYTLMVNVLGGAGLLEEAEALIKNMPVE. Positions 429 to 504 are type E motif; that stretch reads IWSSLLSACR…EVGCSSIEVD (76 aa). The tract at residues 505-535 is type E(+) motif; sequence FEVHEFISCGGTHPKSAEIYSLLDILNWDVS.

Belongs to the PPR family. PCMP-E subfamily.

It localises to the plastid. The protein resides in the chloroplast. In Arabidopsis thaliana (Mouse-ear cress), this protein is Pentatricopeptide repeat-containing protein At2g42920, chloroplastic (PCMP-E75).